The primary structure comprises 264 residues: Thymidylate synthase (264 aa).

Position 21 (Arg-21) interacts with dUMP. His-51 lines the (6R)-5,10-methylene-5,6,7,8-tetrahydrofolate pocket. 126–127 (RR) lines the dUMP pocket. The active-site Nucleophile is the Cys-146. DUMP contacts are provided by residues 166 to 169 (RSCD), Asn-177, and 207 to 209 (HLY). A (6R)-5,10-methylene-5,6,7,8-tetrahydrofolate-binding site is contributed by Asp-169. Position 263 (Ala-263) interacts with (6R)-5,10-methylene-5,6,7,8-tetrahydrofolate.

This sequence belongs to the thymidylate synthase family. Bacterial-type ThyA subfamily. In terms of assembly, homodimer.

It localises to the cytoplasm. The enzyme catalyses dUMP + (6R)-5,10-methylene-5,6,7,8-tetrahydrofolate = 7,8-dihydrofolate + dTMP. It participates in pyrimidine metabolism; dTTP biosynthesis. Catalyzes the reductive methylation of 2'-deoxyuridine-5'-monophosphate (dUMP) to 2'-deoxythymidine-5'-monophosphate (dTMP) while utilizing 5,10-methylenetetrahydrofolate (mTHF) as the methyl donor and reductant in the reaction, yielding dihydrofolate (DHF) as a by-product. This enzymatic reaction provides an intracellular de novo source of dTMP, an essential precursor for DNA biosynthesis. The chain is Thymidylate synthase from Citrobacter koseri (strain ATCC BAA-895 / CDC 4225-83 / SGSC4696).